A 91-amino-acid chain; its full sequence is Large ribosomal subunit protein bL27 (91 aa).

Positions 1–22 (MAHKKGQGSSRNGRDSNPQYRG) are disordered. The span at 7–19 (QGSSRNGRDSNPQ) shows a compositional bias: polar residues.

Belongs to the bacterial ribosomal protein bL27 family.

In Myxococcus xanthus (strain DK1622), this protein is Large ribosomal subunit protein bL27.